We begin with the raw amino-acid sequence, 185 residues long: Ribosome-recycling factor (185 aa).

Belongs to the RRF family.

The protein localises to the cytoplasm. Responsible for the release of ribosomes from messenger RNA at the termination of protein biosynthesis. May increase the efficiency of translation by recycling ribosomes from one round of translation to another. The chain is Ribosome-recycling factor from Roseiflexus sp. (strain RS-1).